The sequence spans 300 residues: UPF0761 membrane protein Patl_3954 (300 aa).

Transmembrane regions (helical) follow at residues 46–66 (LLSL…FPAF), 103–123 (MGAI…SNID), 138–158 (IIFT…LIGL), 184–204 (MLKI…YMIV), 214–234 (ALVG…GFSF), and 248–268 (AMAV…VVLL).

Belongs to the UPF0761 family.

The protein resides in the cell inner membrane. This is UPF0761 membrane protein Patl_3954 from Pseudoalteromonas atlantica (strain T6c / ATCC BAA-1087).